Reading from the N-terminus, the 310-residue chain is ADP-L-glycero-D-manno-heptose-6-epimerase (310 aa).

NADP(+) is bound by residues F10–I11, D31–N32, K38, K53, E75–S79, and N92. Y140 (proton acceptor) is an active-site residue. K144 contributes to the NADP(+) binding site. N169 is a substrate binding site. Residues V170 and K178 each coordinate NADP(+). K178 acts as the Proton acceptor in catalysis. Substrate contacts are provided by residues S180, H187, F201–S204, R209, and Y272.

The protein belongs to the NAD(P)-dependent epimerase/dehydratase family. HldD subfamily. In terms of assembly, homopentamer. It depends on NADP(+) as a cofactor.

It carries out the reaction ADP-D-glycero-beta-D-manno-heptose = ADP-L-glycero-beta-D-manno-heptose. Its pathway is nucleotide-sugar biosynthesis; ADP-L-glycero-beta-D-manno-heptose biosynthesis; ADP-L-glycero-beta-D-manno-heptose from D-glycero-beta-D-manno-heptose 7-phosphate: step 4/4. Its function is as follows. Catalyzes the interconversion between ADP-D-glycero-beta-D-manno-heptose and ADP-L-glycero-beta-D-manno-heptose via an epimerization at carbon 6 of the heptose. The polypeptide is ADP-L-glycero-D-manno-heptose-6-epimerase (Cronobacter sakazakii (strain ATCC BAA-894) (Enterobacter sakazakii)).